A 342-amino-acid polypeptide reads, in one-letter code: uncharacterized protein (342 aa).

In terms of domain architecture, MurNAc-LAA spans 3–173 (IAIRGGHNFL…LIGYLIAKGI (171 aa)).

The protein to C.perfringens CPE1502.

This is an uncharacterized protein from Clostridium perfringens.